The chain runs to 130 residues: uncharacterized protein (130 aa).

This is an uncharacterized protein from Sputnik virophage.